Reading from the N-terminus, the 481-residue chain is Probable zeta-carotene desaturase (481 aa).

Belongs to the zeta carotene desaturase family. The cofactor is decylplastoquinone. It depends on 6-decylubiquinone as a cofactor.

The enzyme catalyses 9,9'-di-cis-zeta-carotene + 2 a quinone = 7,7',9,9'-tetra-cis-lycopene + 2 a quinol. Its pathway is carotenoid biosynthesis; lycopene biosynthesis. In terms of biological role, catalyzes the conversion of zeta-carotene to lycopene via the intermediary of neurosporene. It carries out two consecutive desaturations (introduction of double bonds) at positions C-7 and C-7'. The chain is Probable zeta-carotene desaturase (zds) from Synechococcus elongatus (strain ATCC 33912 / PCC 7942 / FACHB-805) (Anacystis nidulans R2).